Reading from the N-terminus, the 310-residue chain is tRNA dimethylallyltransferase 2 (310 aa).

Residue 15-22 (GPTASGKT) participates in ATP binding. 17–22 (TASGKT) lines the substrate pocket. The tract at residues 40–43 (DSMQ) is interaction with substrate tRNA.

The protein belongs to the IPP transferase family. Monomer. The cofactor is Mg(2+).

It carries out the reaction adenosine(37) in tRNA + dimethylallyl diphosphate = N(6)-dimethylallyladenosine(37) in tRNA + diphosphate. Functionally, catalyzes the transfer of a dimethylallyl group onto the adenine at position 37 in tRNAs that read codons beginning with uridine, leading to the formation of N6-(dimethylallyl)adenosine (i(6)A). This is tRNA dimethylallyltransferase 2 from Geotalea uraniireducens (strain Rf4) (Geobacter uraniireducens).